The sequence spans 190 residues: Potassium-transporting ATPase KdpC subunit (190 aa).

A helical membrane pass occupies residues 10–30 (TFIFLLLITGGVYPLLTTVLG).

Belongs to the KdpC family. As to quaternary structure, the system is composed of three essential subunits: KdpA, KdpB and KdpC.

It localises to the cell inner membrane. Functionally, part of the high-affinity ATP-driven potassium transport (or Kdp) system, which catalyzes the hydrolysis of ATP coupled with the electrogenic transport of potassium into the cytoplasm. This subunit acts as a catalytic chaperone that increases the ATP-binding affinity of the ATP-hydrolyzing subunit KdpB by the formation of a transient KdpB/KdpC/ATP ternary complex. The polypeptide is Potassium-transporting ATPase KdpC subunit (Escherichia coli (strain K12 / MC4100 / BW2952)).